Here is a 156-residue protein sequence, read N- to C-terminus: Protein-export protein SecB (156 aa).

The protein belongs to the SecB family. As to quaternary structure, homotetramer, a dimer of dimers. One homotetramer interacts with 1 SecA dimer.

Its subcellular location is the cytoplasm. In terms of biological role, one of the proteins required for the normal export of preproteins out of the cell cytoplasm. It is a molecular chaperone that binds to a subset of precursor proteins, maintaining them in a translocation-competent state. It also specifically binds to its receptor SecA. This chain is Protein-export protein SecB, found in Aeromonas hydrophila subsp. hydrophila (strain ATCC 7966 / DSM 30187 / BCRC 13018 / CCUG 14551 / JCM 1027 / KCTC 2358 / NCIMB 9240 / NCTC 8049).